Reading from the N-terminus, the 296-residue chain is NAD kinase (296 aa).

Residue Asp-72 is the Proton acceptor of the active site. NAD(+)-binding positions include 72–73 (DG), 146–147 (ND), Arg-157, Lys-174, Asp-176, 187–192 (TAYALS), and Gln-247.

Belongs to the NAD kinase family. A divalent metal cation is required as a cofactor.

The protein resides in the cytoplasm. It catalyses the reaction NAD(+) + ATP = ADP + NADP(+) + H(+). In terms of biological role, involved in the regulation of the intracellular balance of NAD and NADP, and is a key enzyme in the biosynthesis of NADP. Catalyzes specifically the phosphorylation on 2'-hydroxyl of the adenosine moiety of NAD to yield NADP. The protein is NAD kinase of Pseudomonas entomophila (strain L48).